Consider the following 355-residue polypeptide: Methyltransferase FUS9 (355 aa).

S-adenosyl-L-homocysteine is bound by residues Y18, N63, D86, S123, and F124. F231 contributes to the Mg(2+) binding site.

It belongs to the methyltransferase superfamily. Type-7 methyltransferase family. Mg(2+) serves as cofactor.

The protein operates within mycotoxin biosynthesis. Functionally, methyltransferase; part of the gene cluster that mediates the biosynthesis of the mycotoxin fusarin C. Within the cluster, FUS1, FUS2, FUS8 and FUS9 are sufficient for fusarin production. The roles of the other FUS members are yet undetermined. The fusarin C synthetase FUS1 is responsible for the condensation of one acetyl-coenzyme A (CoA) unit with six malonyl-CoA units and the amide linkage of the arising heptaketide and homoserine, subsequently releasing the first intermediate, prefusarin, as an alcohol with an open ring structure. The cytochrome P450 monooxygenase FUS8 participates in multiple oxidation processes at carbon C-20 and is able to use the FUS1 product as substrate, resulting in formation of 20-hydroxy-prefusarin. This reaction seems to be essential before the 2-pyrrolidone ring closure can be catalyzed by FUS2, generating 20-hydroxy-fusarin. FUS8 is able to further oxidizes carbon C-20 after ring closure, resulting in the formation of carboxy-fusarin C. As the last step, FUS9 methylates the hydroxyl group at C-21 to generate fusarin C. Fusarin C can then rearrange to epi-fusarin C, the (z)-isomers, and fusarin A and fusarin D. This chain is Methyltransferase FUS9, found in Gibberella fujikuroi (strain CBS 195.34 / IMI 58289 / NRRL A-6831) (Bakanae and foot rot disease fungus).